The chain runs to 933 residues: Progesterone receptor (933 aa).

The segment at 1–164 (MTELKAKGPR…PATQRVLSPL (164 aa)) is AF3; mediates transcriptional activation. A disordered region spans residues 1–256 (MTELKAKGPR…AAAGGGAAAV (256 aa)). The modulating, Pro-Rich stretch occupies residues 1 to 566 (MTELKAKGPR…YSFESLPQKI (566 aa)). Ser20 is subject to Phosphoserine. Short sequence motifs (LXXL motif) lie at residues 55 to 59 (LDGLL) and 115 to 119 (LDTLL). Phosphoserine is present on residues Ser130 and Ser162. The tract at residues 165-305 (MSRSGGKAGD…LATTTMDFIH (141 aa)) is mediates transcriptional transrepression. Residues 183–187 (KVLPR) carry the Nuclear localization signal motif. 2 positions are modified to phosphoserine: Ser190 and Ser213. The span at 220 to 231 (EVEEEDGSESED) shows a compositional bias: acidic residues. Position 294 is a phosphoserine; by MAPK1 (Ser294). Residues 332–380 (GAGAASAFAPPRSSPSASSTPVAVGDFPDCAYPPDADPKDDAYPLYGDF) form a disordered region. Residues 335 to 350 (AASAFAPPRSSPSASS) show a composition bias toward low complexity. The residue at position 345 (Ser345) is a Phosphoserine; by MAPK. Residue Lys388 forms a Glycyl lysine isopeptide (Lys-Gly) (interchain with G-Cter in SUMO); alternate linkage. Lys388 participates in a covalent cross-link: Glycyl lysine isopeptide (Lys-Gly) (interchain with G-Cter in ubiquitin); alternate. Ser400 carries the post-translational modification Phosphoserine; by CDK2. The tract at residues 415 to 454 (PDFPLGPPPPLPPRAPPSRPGEAAVTAAPASASVSSSSSS) is disordered. The span at 418-433 (PLGPPPPLPPRAPPSR) shows a compositional bias: pro residues. Residues 434-454 (PGEAAVTAAPASASVSSSSSS) are compositionally biased toward low complexity. Residues 456–546 (STLECILYKA…VYPPYLNYLR (91 aa)) are AF1; mediates transcriptional activation. Lys531 is covalently cross-linked (Glycyl lysine isopeptide (Lys-Gly) (interchain with G-Cter in SUMO)). NR C4-type zinc fingers lie at residues 567 to 587 (CLICGDEASGCHYGVLTCGSC) and 603 to 627 (CAGRNDCIVDKIRRKNCPACRLRKC). Positions 567 to 639 (CLICGDEASG…AGMVLGGRKF (73 aa)) form a DNA-binding region, nuclear receptor. Position 676 is a phosphoserine (Ser676). An NR LBD domain is found at 679–913 (QDIQFFPPLI…EFPEMMSEVI (235 aa)). An AF2; mediates transcriptional activation region spans residues 687 to 933 (LINLLVSIEP…MVKPLLFHKK (247 aa)). Position 766 (Arg766) interacts with progesterone.

The protein belongs to the nuclear hormone receptor family. In terms of assembly, interacts with SMARD1 and UNC45A. Interacts with CUEDC2; the interaction promotes ubiquitination, decreases sumoylation, and represses transcriptional activity. Interacts with PIAS3; the interaction promotes sumoylation of PR in a hormone-dependent manner, inhibits DNA-binding, and alters nuclear export. Interacts with SP1; the interaction requires ligand-induced phosphorylation on Ser-345 by ERK1/2-MAPK. Interacts with PRMT2. Interacts with NCOA2 and NCOA1. Interacts with KLF9. Interacts with GTF2B. In terms of processing, phosphorylated on multiple serine sites. Several of these sites are hormone-dependent. Phosphorylation on Ser-294 is highly hormone-dependent and modulates ubiquitination and sumoylation on Lys-388. Phosphorylation on Ser-345 also requires induction by hormone. Basal phosphorylation on Ser-162, Ser-190 and Ser-400 is increased in response to progesterone and can be phosphorylated in vitro by the CDK2-A1 complex. Increased levels of phosphorylation on Ser-400 also in the presence of EGF, heregulin, IGF, PMA and FBS. Phosphorylation at this site by CDK2 is ligand-independent, and increases nuclear translocation and transcriptional activity. Phosphorylation at Ser-162 and Ser-294, but not at Ser-190, is impaired during the G(2)/M phase of the cell cycle. Phosphorylation on Ser-345 by ERK1/2 MAPK is required for interaction with SP1. Post-translationally, sumoylation is hormone-dependent and represses transcriptional activity. Sumoylation on all three sites is enhanced by PIAS3. Desumoylated by SENP1. Sumoylation on Lys-388, the main site of sumoylation, is repressed by ubiquitination on the same site, and modulated by phosphorylation at Ser-294. Ubiquitination is hormone-dependent and represses sumoylation on the same site. Promoted by MAPK-mediated phosphorylation on Ser-294. Ubiquitinated by UBR5, leading to its degradation: UBR5 specifically recognizes and binds ligand-bound PGR when it is not associated with coactivators (NCOAs). In presence of NCOAs, the UBR5-degron is not accessible, preventing its ubiquitination and degradation. In terms of processing, palmitoylated by ZDHHC7 and ZDHHC21. Palmitoylation is required for plasma membrane targeting and for rapid intracellular signaling via ERK and AKT kinases and cAMP generation.

Its subcellular location is the nucleus. It is found in the cytoplasm. Functionally, the steroid hormones and their receptors are involved in the regulation of eukaryotic gene expression and affect cellular proliferation and differentiation in target tissues. Transcriptional activator of several progesteron-dependent promoters in a variety of cell types. Involved in activation of SRC-dependent MAPK signaling on hormone stimulation. The sequence is that of Progesterone receptor (PGR) from Chlorocebus aethiops (Green monkey).